The primary structure comprises 189 residues: Chitin synthase 3 (189 aa).

Belongs to the chitin synthase family. Class II subfamily.

The protein localises to the cell membrane. The enzyme catalyses [(1-&gt;4)-N-acetyl-beta-D-glucosaminyl](n) + UDP-N-acetyl-alpha-D-glucosamine = [(1-&gt;4)-N-acetyl-beta-D-glucosaminyl](n+1) + UDP + H(+). Polymerizes chitin, a structural polymer of the cell wall and septum, by transferring the sugar moiety of UDP-GlcNAc to the non-reducing end of the growing chitin polymer. The sequence is that of Chitin synthase 3 (CHS3) from Ajellomyces capsulatus (Darling's disease fungus).